Consider the following 78-residue polypeptide: Serine rich endogenous peptide 19 (78 aa).

Positions 1–25 are cleaved as a signal peptide; it reads MCNIVVFLLTLTLFLFSGLSNTAFA. The SCOOP motif signature appears at 50-64; the sequence is KIEVDGSCSRRAPGR. The short motif at 56 to 58 is the SxS motif essential for MIK2 binding element; the sequence is SCS. The tract at residues 57–78 is disordered; the sequence is CSRRAPGRRRPPNRPPKPCTKP. Positions 69–78 are enriched in pro residues; it reads NRPPKPCTKP.

It belongs to the serine rich endogenous peptide (SCOOP) phytocytokine family. As to quaternary structure, interacts with MIK2 (via extracellular leucine-rich repeat domain); this interaction triggers the formation of complex between MIK2 and the BAK1/SERK3 and SERK4 coreceptors, and subsequent BAK1 activation by phosphorylation.

The protein localises to the cell membrane. It localises to the secreted. It is found in the extracellular space. Its subcellular location is the apoplast. Brassicaceae-specific phytocytokine (plant endogenous peptide released into the apoplast) perceived by MIK2 in a BAK1/SERK3 and SERK4 coreceptors-dependent manner, that modulates various physiological and antimicrobial processes including growth prevention and reactive oxygen species (ROS) response regulation. The protein is Serine rich endogenous peptide 19 of Arabidopsis thaliana (Mouse-ear cress).